The following is a 160-amino-acid chain: MLPFILFSTLLPLIFTESEQQLWFCNSSDATFSYSYCDSMKFPFSITAEPCITLKGTNGFLHIKFIPRRDLKKLYFNLSINVNSIEVPTRKEIICHGYDDNYSFCKALKGETVNTVVPFSFKGILFPKGQYRCVAEAIVGDNEEKLFCLNFTIIHHPNVN.

Positions 1–16 (MLPFILFSTLLPLIFT) are cleaved as a signal peptide. 3 disulfide bridges follow: Cys25–Cys51, Cys37–Cys148, and Cys95–Cys105. Residues Asn26, Asn77, and Asn101 are each glycosylated (N-linked (GlcNAc...) asparagine). Residues 119 to 123 (FSFKG) are interaction with lipopolysaccharide. N-linked (GlcNAc...) asparagine glycosylation is present at Asn150.

Heterogeneous homomer formed from homodimers; disulfide-linked. Belongs to the lipopolysaccharide (LPS) receptor, a multi-protein complex containing at least CD14, LY96 and TLR4. Binds to the extracellular domains of TLR2 and TLR4. Ligand binding induces interaction with TLR4 and oligomerization of the complex. Post-translationally, N-glycosylated.

It localises to the secreted. The protein localises to the extracellular space. Its function is as follows. Binds bacterial lipopolysaccharide (LPS). Cooperates with TLR4 in the innate immune response to bacterial lipopolysaccharide (LPS), and with TLR2 in the response to cell wall components from Gram-positive and Gram-negative bacteria. Enhances TLR4-dependent activation of NF-kappa-B. Cells expressing both LY96 and TLR4, but not TLR4 alone, respond to LPS. This chain is Lymphocyte antigen 96 (LY96), found in Cricetulus griseus (Chinese hamster).